Consider the following 488-residue polypeptide: GTPase Der (488 aa).

2 EngA-type G domains span residues Pro3–Met166 and Ile199–Thr372. Residues Gly9–Ser16, Asp56–Ile60, Asn118–Asp121, Gly205–Ser212, Asp252–Val256, and Asn317–Asp320 contribute to the GTP site. The region spanning Arg373–Asp457 is the KH-like domain. Positions Met469–Lys488 are disordered. Over residues Arg473 to Lys488 the composition is skewed to basic residues.

It belongs to the TRAFAC class TrmE-Era-EngA-EngB-Septin-like GTPase superfamily. EngA (Der) GTPase family. As to quaternary structure, associates with the 50S ribosomal subunit.

In terms of biological role, GTPase that plays an essential role in the late steps of ribosome biogenesis. The chain is GTPase Der from Shewanella sp. (strain W3-18-1).